The sequence spans 523 residues: DNA primase (523 aa).

Residues 37 to 61 form a CHC2-type zinc finger; that stretch reads CPFHAEKTPSFFVNPLQGYFYCFGC. The Toprim domain maps to 259 to 340; the sequence is KSVILVEGYI…NVSVVRMDFG (82 aa). Mg(2+) contacts are provided by glutamate 265, aspartate 309, and aspartate 311.

It belongs to the DnaG primase family. Monomer. Interacts with DnaB. Zn(2+) is required as a cofactor. It depends on Mg(2+) as a cofactor.

The enzyme catalyses ssDNA + n NTP = ssDNA/pppN(pN)n-1 hybrid + (n-1) diphosphate.. In terms of biological role, RNA polymerase that catalyzes the synthesis of short RNA molecules used as primers for DNA polymerase during DNA replication. This chain is DNA primase, found in Borreliella burgdorferi (strain ATCC 35210 / DSM 4680 / CIP 102532 / B31) (Borrelia burgdorferi).